A 558-amino-acid chain; its full sequence is DEAD-box ATP-dependent RNA helicase 49 (558 aa).

The Q motif motif lies at 16-44 (FSELKPPLSEDIIEALDRSGFEVCTPVQA). The 180-residue stretch at 47–226 (IPFLCSHKDV…KAGLRNAMEV (180 aa)) folds into the Helicase ATP-binding domain. 60–67 (AATGSGKT) serves as a coordination point for ATP. Residues 174–177 (DEAD) carry the DEAD box motif. The Helicase C-terminal domain maps to 255–402 (QLVHLLIENK…ERKCSENASD (148 aa)). The tract at residues 506–558 (KDKLQQEKRGKRKKSSKEAVDDSNKASRKRKLTGRQRQTIQTAQDEEEMNLRL) is disordered. Basic and acidic residues predominate over residues 521 to 530 (SKEAVDDSNK). Residues 549–558 (QDEEEMNLRL) show a composition bias toward acidic residues.

It belongs to the DEAD box helicase family. DDX55/SPB4 subfamily.

The catalysed reaction is ATP + H2O = ADP + phosphate + H(+). The protein is DEAD-box ATP-dependent RNA helicase 49 (RH49) of Arabidopsis thaliana (Mouse-ear cress).